A 326-amino-acid polypeptide reads, in one-letter code: Transcription cofactor vestigial-like protein 3 (326 aa).

Positions valine 57–glutamate 80 are disordered. Residue lysine 62 forms a Glycyl lysine isopeptide (Lys-Gly) (interchain with G-Cter in SUMO2) linkage. Acidic residues predominate over residues glutamate 64–lysine 75. Residue lysine 126 forms a Glycyl lysine isopeptide (Lys-Gly) (interchain with G-Cter in SUMO2) linkage. 2 disordered regions span residues proline 175 to valine 203 and histidine 233 to aspartate 256. Positions histidine 233–proline 249 are enriched in basic residues.

Belongs to the vestigial family. Enriched in placenta.

It is found in the nucleus. May act as a specific coactivator for the mammalian TEFs. The chain is Transcription cofactor vestigial-like protein 3 (VGLL3) from Homo sapiens (Human).